The primary structure comprises 155 residues: MTEQQQGSRRDVVAGGIFIAIAALFAIQGSRYEFGTATQMGPGFFPVVLAVLLAIFGAFTMIAGFRKVPEAHDGPVSWRALVLVCLALAIFGAGARPLGLVPVVVICTFMSAMASRKNTVFSAGVMALVMAVLCFVIFKIGLAVTLPTFGPVFGR.

This is an uncharacterized protein from Agrobacterium vitis (Rhizobium vitis).